The chain runs to 580 residues: Laccase-20 (580 aa).

The N-terminal stretch at 1–23 is a signal peptide; it reads MVASLLCTVAVAVLAVAAVGGEA. Plastocyanin-like domains lie at 31-147 and 156-310; these read VVHE…PRDG and KDVP…YTGV. Asn36 and Asn42 each carry an N-linked (GlcNAc...) asparagine glycan. Cu cation contacts are provided by His81 and His83. Asn115 carries N-linked (GlcNAc...) asparagine glycosylation. Cu cation-binding residues include His126 and His128. N-linked (GlcNAc...) asparagine glycosylation is found at Asn200, Asn339, Asn373, Asn392, Asn399, Asn429, and Asn460. The Plastocyanin-like 3 domain occupies 419–561; it reads DFPVRPPRPY…ATAFIVEDGP (143 aa). Cu cation contacts are provided by Asn478, His481, His483, His540, Cys541, His542, His546, and Met551. The interval 560 to 580 is disordered; that stretch reads GPTPETSLPPPPPEFKRCDAS.

It belongs to the multicopper oxidase family. Requires Cu cation as cofactor.

Its subcellular location is the secreted. The protein localises to the extracellular space. The protein resides in the apoplast. It carries out the reaction 4 hydroquinone + O2 = 4 benzosemiquinone + 2 H2O. Functionally, lignin degradation and detoxification of lignin-derived products. This Oryza sativa subsp. japonica (Rice) protein is Laccase-20 (LAC20).